The following is a 1323-amino-acid chain: Nck-associated protein 5-like (1323 aa).

6 disordered regions span residues 1-22 (MDQPAGGTGKLRASAGEDDSME), 113-142 (QIPLTPLQPPSERPTSPAPNVSEGPATSLP), 156-175 (QQLRPGGPGPPATPPPALDA), 204-238 (PATPWRPTGQGPGSPEPINGEPCGPPQPEPSPWAP), 260-314 (PGEE…DTLL), and 341-714 (GATG…EQPE). Positions 1-135 (MDQPAGGTGK…PTSPAPNVSE (135 aa)) are mediates interaction with CDK5RAP2 and is required for homodimerization and microtubule bundle formation. The stretch at 22 to 109 (ELSTCQELLH…LQQKLQLTAN (88 aa)) forms a coiled coil. 2 stretches are compositionally biased toward pro residues: residues 162-172 (GPGPPATPPPA) and 226-236 (CGPPQPEPSPW). A compositionally biased stretch (low complexity) spans 271–298 (ASSRAPPSAQGPSSGPHCAPGSSSSSSS). A compositionally biased stretch (pro residues) spans 353-364 (PGKPNSPDPGPP). Serine 436, serine 447, serine 466, and serine 473 each carry phosphoserine; by CDK1. The (S/T)X(I/L)P motif 1 motif lies at 480 to 483 (SRIP). 3 positions are modified to phosphoserine: serine 489, serine 492, and serine 494. Residues 531-542 (LRPSQSTVSTAL) show a composition bias toward polar residues. The residue at position 573 (serine 573) is a Phosphoserine; by CDK1. Positions 647–660 (RPGDPSHTPLRDRL) are enriched in basic and acidic residues. Threonine 654 carries the post-translational modification Phosphothreonine. A mediates interaction with beta-tubulin and is required for microtubule bundle formation region spans residues 743–1136 (RVYSSHSMGA…SGTPSKNLPK (394 aa)). The residue at position 760 (serine 760) is a Phosphoserine; by CDK1. Disordered stretches follow at residues 778–875 (ALCP…HSAI), 892–948 (GQER…EVKT), 979–1003 (AYLSRARPRPGGPATVPSPGLGQAQ), and 1027–1323 (KELP…GSQG). Positions 799–817 (KPKSPHSSPTKLPSKSPTK) are enriched in low complexity. Positions 808-811 (TKLP) match the (S/T)X(I/L)P motif 2 motif. Positions 918–921 (SKLP) match the (S/T)X(I/L)P motif 3; required for interaction with MAPRE1 motif. Over residues 925-934 (RRTEATKNKD) the composition is skewed to basic and acidic residues. The stretch at 942-985 (LRKEVKTEARKLEAESLNISKLMAKAEDLRRALEEEKAYLSRAR) forms a coiled coil. Residues 1027 to 1041 (KELPPKSWREPKPEY) are compositionally biased toward basic and acidic residues. Polar residues-rich tracts occupy residues 1097–1112 (VSTTHFTACGSLTRTL) and 1124–1136 (HSSSGTPSKNLPK). A compositionally biased stretch (pro residues) spans 1143 to 1153 (DPPPGAPPARP). Residue serine 1184 is modified to Phosphoserine. Polar residues-rich tracts occupy residues 1225-1237 (TFPNTRTAGSSSD) and 1264-1273 (VDPSRTSTPQ). A compositionally biased stretch (low complexity) spans 1302-1323 (LETSESLSDSLYDSLSSCGSQG).

Homodimer. Interacts with CDK5RAP2. Interacts with MAPRE1. Interacts with beta-tubulin. CDK1/Cyclin B-dependent phosphorylation mediates its dissociation from centrosomes during mitosis.

The protein resides in the cytoplasm. Its subcellular location is the cytoskeleton. It is found in the microtubule organizing center. It localises to the centrosome. In terms of biological role, regulates microtubule organization and stabilization. Promotes microtubule growth and bundling formation and stabilizes microtubules by increasing intense acetylation of microtubules. Both tubulin-binding and homodimer formation are required for NCKAP5L-mediated microtubule bundle formation. This is Nck-associated protein 5-like (Nckap5l) from Mus musculus (Mouse).